A 229-amino-acid polypeptide reads, in one-letter code: GTP cyclohydrolase 1 (229 aa).

The segment at 1 to 31 is disordered; that stretch reads MFRESDNTIAPSNQDLNKPVVDKEQPAERTP. Residues 7-16 are compositionally biased toward polar residues; the sequence is NTIAPSNQDL. Zn(2+) is bound by residues cysteine 117, histidine 120, and cysteine 188.

This sequence belongs to the GTP cyclohydrolase I family. As to quaternary structure, toroid-shaped homodecamer, composed of two pentamers of five dimers.

The enzyme catalyses GTP + H2O = 7,8-dihydroneopterin 3'-triphosphate + formate + H(+). It participates in cofactor biosynthesis; 7,8-dihydroneopterin triphosphate biosynthesis; 7,8-dihydroneopterin triphosphate from GTP: step 1/1. The chain is GTP cyclohydrolase 1 from Rhodopirellula baltica (strain DSM 10527 / NCIMB 13988 / SH1).